Reading from the N-terminus, the 272-residue chain is Dermonecrotic toxin SpeSicTox-betaIB1b (272 aa).

H5 is a catalytic residue. Mg(2+)-binding residues include E25 and D27. H41 (nucleophile) is an active-site residue. 2 cysteine pairs are disulfide-bonded: C45–C51 and C47–C191. D85 contributes to the Mg(2+) binding site.

Belongs to the arthropod phospholipase D family. Class II subfamily. The cofactor is Mg(2+). In terms of tissue distribution, expressed by the venom gland.

The protein resides in the secreted. It carries out the reaction an N-(acyl)-sphingosylphosphocholine = an N-(acyl)-sphingosyl-1,3-cyclic phosphate + choline. The catalysed reaction is an N-(acyl)-sphingosylphosphoethanolamine = an N-(acyl)-sphingosyl-1,3-cyclic phosphate + ethanolamine. The enzyme catalyses a 1-acyl-sn-glycero-3-phosphocholine = a 1-acyl-sn-glycero-2,3-cyclic phosphate + choline. It catalyses the reaction a 1-acyl-sn-glycero-3-phosphoethanolamine = a 1-acyl-sn-glycero-2,3-cyclic phosphate + ethanolamine. In terms of biological role, dermonecrotic toxins cleave the phosphodiester linkage between the phosphate and headgroup of certain phospholipids (sphingolipid and lysolipid substrates), forming an alcohol (often choline) and a cyclic phosphate. This toxin acts on sphingomyelin (SM). It may also act on ceramide phosphoethanolamine (CPE), lysophosphatidylcholine (LPC) and lysophosphatidylethanolamine (LPE), but not on lysophosphatidylserine (LPS), and lysophosphatidylglycerol (LPG). It acts by transphosphatidylation, releasing exclusively cyclic phosphate products as second products. Induces dermonecrosis, hemolysis, increased vascular permeability, edema, inflammatory response, and platelet aggregation. This Sicarius peruensis (Six-eyed sand spider) protein is Dermonecrotic toxin SpeSicTox-betaIB1b.